Here is a 325-residue protein sequence, read N- to C-terminus: Cytochrome f (325 aa).

Residues 1–40 (MSKINLSTMWSSFIKKIAKTILVAIACISLFLTSSPAANA) form the signal peptide. Heme contacts are provided by tyrosine 41, cysteine 62, cysteine 65, and histidine 66. The helical transmembrane segment at 291–311 (VKWLMAFFALVMLAQIMLVLK) threads the bilayer.

The protein belongs to the cytochrome f family. The 4 large subunits of the cytochrome b6-f complex are cytochrome b6, subunit IV (17 kDa polypeptide, PetD), cytochrome f and the Rieske protein, while the 4 small subunits are PetG, PetL, PetM and PetN. The complex functions as a dimer. Heme serves as cofactor.

Its subcellular location is the cellular thylakoid membrane. Component of the cytochrome b6-f complex, which mediates electron transfer between photosystem II (PSII) and photosystem I (PSI), cyclic electron flow around PSI, and state transitions. The sequence is that of Cytochrome f from Trichodesmium erythraeum (strain IMS101).